A 729-amino-acid chain; its full sequence is Fatty acid oxidation complex subunit alpha (729 aa).

The interval 1–189 (MLYKGDTLYL…KIGLVDGVVK (189 aa)) is enoyl-CoA hydratase/isomerase. A substrate-binding site is contributed by Asp-296. The tract at residues 311 to 729 (ETPKQAAVLG…ARLVGDLKTA (419 aa)) is 3-hydroxyacyl-CoA dehydrogenase. Residues Met-324, Asp-343, 400–402 (VVE), Lys-407, and Ser-429 contribute to the NAD(+) site. His-450 serves as the catalytic For 3-hydroxyacyl-CoA dehydrogenase activity. NAD(+) is bound at residue Asn-453. Substrate contacts are provided by Asn-500 and Tyr-660.

It in the N-terminal section; belongs to the enoyl-CoA hydratase/isomerase family. The protein in the C-terminal section; belongs to the 3-hydroxyacyl-CoA dehydrogenase family. In terms of assembly, heterotetramer of two alpha chains (FadB) and two beta chains (FadA).

The catalysed reaction is a (3S)-3-hydroxyacyl-CoA + NAD(+) = a 3-oxoacyl-CoA + NADH + H(+). It carries out the reaction a (3S)-3-hydroxyacyl-CoA = a (2E)-enoyl-CoA + H2O. It catalyses the reaction a 4-saturated-(3S)-3-hydroxyacyl-CoA = a (3E)-enoyl-CoA + H2O. The enzyme catalyses (3S)-3-hydroxybutanoyl-CoA = (3R)-3-hydroxybutanoyl-CoA. The catalysed reaction is a (3Z)-enoyl-CoA = a 4-saturated (2E)-enoyl-CoA. It carries out the reaction a (3E)-enoyl-CoA = a 4-saturated (2E)-enoyl-CoA. Its pathway is lipid metabolism; fatty acid beta-oxidation. In terms of biological role, involved in the aerobic and anaerobic degradation of long-chain fatty acids via beta-oxidation cycle. Catalyzes the formation of 3-oxoacyl-CoA from enoyl-CoA via L-3-hydroxyacyl-CoA. It can also use D-3-hydroxyacyl-CoA and cis-3-enoyl-CoA as substrate. In Escherichia coli (strain SE11), this protein is Fatty acid oxidation complex subunit alpha.